The sequence spans 226 residues: Leucyl/phenylalanyl-tRNA--protein transferase (226 aa).

This sequence belongs to the L/F-transferase family.

It localises to the cytoplasm. It carries out the reaction N-terminal L-lysyl-[protein] + L-leucyl-tRNA(Leu) = N-terminal L-leucyl-L-lysyl-[protein] + tRNA(Leu) + H(+). The enzyme catalyses N-terminal L-arginyl-[protein] + L-leucyl-tRNA(Leu) = N-terminal L-leucyl-L-arginyl-[protein] + tRNA(Leu) + H(+). It catalyses the reaction L-phenylalanyl-tRNA(Phe) + an N-terminal L-alpha-aminoacyl-[protein] = an N-terminal L-phenylalanyl-L-alpha-aminoacyl-[protein] + tRNA(Phe). Its function is as follows. Functions in the N-end rule pathway of protein degradation where it conjugates Leu, Phe and, less efficiently, Met from aminoacyl-tRNAs to the N-termini of proteins containing an N-terminal arginine or lysine. This chain is Leucyl/phenylalanyl-tRNA--protein transferase, found in Pseudomonas aeruginosa (strain ATCC 15692 / DSM 22644 / CIP 104116 / JCM 14847 / LMG 12228 / 1C / PRS 101 / PAO1).